A 201-amino-acid chain; its full sequence is uncharacterized protein (201 aa).

This is an uncharacterized protein from Cestrum yellow leaf curling virus (CmYLCV).